Reading from the N-terminus, the 350-residue chain is Lipoyl synthase (350 aa).

A disordered region spans residues methionine 1 to valine 39. Cysteine 73, cysteine 78, cysteine 84, cysteine 99, cysteine 103, cysteine 106, and serine 314 together coordinate [4Fe-4S] cluster. The region spanning tryptophan 85–methionine 303 is the Radical SAM core domain.

The protein belongs to the radical SAM superfamily. Lipoyl synthase family. The cofactor is [4Fe-4S] cluster.

Its subcellular location is the cytoplasm. It carries out the reaction [[Fe-S] cluster scaffold protein carrying a second [4Fe-4S](2+) cluster] + N(6)-octanoyl-L-lysyl-[protein] + 2 oxidized [2Fe-2S]-[ferredoxin] + 2 S-adenosyl-L-methionine + 4 H(+) = [[Fe-S] cluster scaffold protein] + N(6)-[(R)-dihydrolipoyl]-L-lysyl-[protein] + 4 Fe(3+) + 2 hydrogen sulfide + 2 5'-deoxyadenosine + 2 L-methionine + 2 reduced [2Fe-2S]-[ferredoxin]. It participates in protein modification; protein lipoylation via endogenous pathway; protein N(6)-(lipoyl)lysine from octanoyl-[acyl-carrier-protein]: step 2/2. Its function is as follows. Catalyzes the radical-mediated insertion of two sulfur atoms into the C-6 and C-8 positions of the octanoyl moiety bound to the lipoyl domains of lipoate-dependent enzymes, thereby converting the octanoylated domains into lipoylated derivatives. This Ectopseudomonas mendocina (strain ymp) (Pseudomonas mendocina) protein is Lipoyl synthase.